The primary structure comprises 113 residues: MQFKFLSTVALATLAVAAPAPTDPTPIPPSQCNTGPIQCCNTVTQASNPVAGLLLGLLGIVLQDLNVLVGLTCSPISIIGLPGNSCNAQPVCCQNNNFNGLIAIGCTPININL.

The N-terminal stretch at 1-17 (MQFKFLSTVALATLAVA) is a signal peptide. Intrachain disulfides connect cysteine 32–cysteine 92, cysteine 39–cysteine 86, cysteine 40–cysteine 73, and cysteine 93–cysteine 106.

The protein belongs to the fungal hydrophobin family. As to quaternary structure, self-assembles to form functional amyloid fibrils called rodlets. Self-assembly into fibrillar rodlets occurs spontaneously at hydrophobic:hydrophilic interfaces and the rodlets further associate laterally to form amphipathic monolayers.

Its subcellular location is the secreted. The protein localises to the cell wall. Functionally, aerial growth, conidiation, and dispersal of filamentous fungi in the environment rely upon a capability of their secreting small amphipathic proteins called hydrophobins (HPBs) with low sequence identity. Class I can self-assemble into an outermost layer of rodlet bundles on aerial cell surfaces, conferring cellular hydrophobicity that supports fungal growth, development and dispersal; whereas Class II form highly ordered films at water-air interfaces through intermolecular interactions but contribute nothing to the rodlet structure. CoH1 is an asexual monokaryon-specific class I hydrophobin that is involved in aerial growth of mycelia. In Coprinopsis cinerea (Inky cap fungus), this protein is Class I hydrophobin 1.